A 153-amino-acid chain; its full sequence is Regulatory protein RecX (153 aa).

Belongs to the RecX family.

It localises to the cytoplasm. Modulates RecA activity. This Pseudomonas aeruginosa (strain UCBPP-PA14) protein is Regulatory protein RecX.